A 307-amino-acid polypeptide reads, in one-letter code: Fructose-bisphosphate aldolase (307 aa).

Ser-49 is a binding site for D-glyceraldehyde 3-phosphate. The active-site Proton donor is the Asp-82. Zn(2+) contacts are provided by His-83, Asp-104, Glu-134, and His-180. Gly-181 lines the dihydroxyacetone phosphate pocket. Residue His-210 coordinates Zn(2+). Residues 211-213 and 253-256 contribute to the dihydroxyacetone phosphate site; these read GAS and NTDT.

This sequence belongs to the class II fructose-bisphosphate aldolase family. In terms of assembly, homodimer. Zn(2+) is required as a cofactor.

It catalyses the reaction beta-D-fructose 1,6-bisphosphate = D-glyceraldehyde 3-phosphate + dihydroxyacetone phosphate. It functions in the pathway carbohydrate degradation; glycolysis; D-glyceraldehyde 3-phosphate and glycerone phosphate from D-glucose: step 4/4. Its function is as follows. Catalyzes the aldol condensation of dihydroxyacetone phosphate (DHAP or glycerone-phosphate) with glyceraldehyde 3-phosphate (G3P) to form fructose 1,6-bisphosphate (FBP) in gluconeogenesis and the reverse reaction in glycolysis. The chain is Fructose-bisphosphate aldolase (fba) from Helicobacter pylori (strain J99 / ATCC 700824) (Campylobacter pylori J99).